The following is a 210-amino-acid chain: Riboflavin kinase (210 aa).

Positions 1–11 (MRPSNPRPPVT) are enriched in pro residues. The segment at 1–24 (MRPSNPRPPVTGPDSGPEAPFPIR) is disordered. Mg(2+)-binding residues include threonine 44 and asparagine 46. Glutamate 113 serves as the catalytic Nucleophile.

It belongs to the flavokinase family. Zn(2+) is required as a cofactor. The cofactor is Mg(2+).

The catalysed reaction is riboflavin + ATP = FMN + ADP + H(+). The protein operates within cofactor biosynthesis; FMN biosynthesis; FMN from riboflavin (ATP route): step 1/1. In terms of biological role, catalyzes the phosphorylation of riboflavin (vitamin B2) to form flavin mononucleotide (FMN) coenzyme. This Emericella nidulans (strain FGSC A4 / ATCC 38163 / CBS 112.46 / NRRL 194 / M139) (Aspergillus nidulans) protein is Riboflavin kinase (fmn1).